Reading from the N-terminus, the 506-residue chain is RNA-splicing ligase RtcB homolog (506 aa).

Residues D120, C123, H228, H260, and H354 each coordinate Mn(2+). A GMP-binding site is contributed by N227–E231. GMP contacts are provided by residues H354 to N355, G403 to M406, S410, H429 to G432, and K505. Residue H429 is the GMP-histidine intermediate of the active site.

This sequence belongs to the RtcB family. Catalytic component of the tRNA-splicing ligase complex. Mn(2+) serves as cofactor.

The catalysed reaction is a 3'-end 3'-phospho-ribonucleotide-RNA + a 5'-end dephospho-ribonucleoside-RNA + GTP = a ribonucleotidyl-ribonucleotide-RNA + GMP + diphosphate. It carries out the reaction a 3'-end 2',3'-cyclophospho-ribonucleotide-RNA + a 5'-end dephospho-ribonucleoside-RNA + GTP + H2O = a ribonucleotidyl-ribonucleotide-RNA + GMP + diphosphate + H(+). Its function is as follows. Catalytic subunit of the tRNA-splicing ligase complex that acts by directly joining spliced tRNA halves to mature-sized tRNAs by incorporating the precursor-derived splice junction phosphate into the mature tRNA as a canonical 3',5'-phosphodiester. May act as an RNA ligase with broad substrate specificity, and may function toward other RNAs. The sequence is that of RNA-splicing ligase RtcB homolog from Anopheles gambiae (African malaria mosquito).